A 383-amino-acid polypeptide reads, in one-letter code: Soluble hydrogenase 42 kDa subunit (383 aa).

At K194 the chain carries N6-(pyridoxal phosphate)lysine.

The protein belongs to the class-V pyridoxal-phosphate-dependent aminotransferase family. Heterodimer of a large and a small subunit. The cofactor is pyridoxal 5'-phosphate.

It is found in the cytoplasm. In terms of biological role, soluble hydrogenase catalyzes both production and consumption of hydrogen from suitable artificial electron donors or acceptors. This subunit catalyzes the tritium-exchange activity. This Anabaena cylindrica protein is Soluble hydrogenase 42 kDa subunit.